A 575-amino-acid chain; its full sequence is Beta-amylase 1, chloroplastic (575 aa).

The N-terminal 41 residues, 1–41, are a transit peptide targeting the chloroplast; that stretch reads MALNLSHQLGVLAGTPIKSGEMTDSSLLSISPPSARMMTPK. Phosphoserine is present on residues Ser-55 and Ser-59. A disulfide bond links Cys-73 and Cys-511. Substrate contacts are provided by Asp-147, His-187, and Asp-195. Residue Glu-279 is the Proton donor of the active site. Residues Lys-392, His-397, and Thr-439 each coordinate substrate. The active-site Proton acceptor is the Glu-477. Substrate is bound by residues 478-479 and Arg-517; that span reads NA.

Belongs to the glycosyl hydrolase 14 family. As to expression, expressed in leaves, roots, flowers, pollen, and seeds.

The protein localises to the plastid. It localises to the chloroplast. It carries out the reaction Hydrolysis of (1-&gt;4)-alpha-D-glucosidic linkages in polysaccharides so as to remove successive maltose units from the non-reducing ends of the chains.. With respect to regulation, redox regulation; active in reducing conditions, inactive in oxidizing conditions. Thioredoxins f1, m1, and y1 mediate the reversible reductive activation of oxidized BAM1. In terms of biological role, beta-amylase activity. Can use p-nitrophenyl maltopentaoside (PNPG5) as substrate only in reduced form. Can play a minor role in the starch degradation and maltose metabolism in chloroplasts during the night. More active on phosphorylated glucan. Interacts directly with starch or other alpha-1,4-glucan. This is Beta-amylase 1, chloroplastic (BAM1) from Arabidopsis thaliana (Mouse-ear cress).